The following is a 516-amino-acid chain: MDKCVITGHHFSVENMNHNNNNYDFDNKNNSIGGGGGGGGSSSSRSSSSRSSSNRSSSGSSGGSGSNSSSSINNIINSDNDFKTERKQTKSPPLTLPNIKTTTTTTTTTTTTTTTTTKNENISSSESENSSSRVGSPNCNKKVKKTKTITISPTGYNINSKDDINKFTTYGYTNEKSNARRDPKWINDIIERYNRLKSESLNNNYNGSSSNNNNINNINNNSNNTTSPCQSPSSNTATITSISSPTSSSSSLSSPSFSINNIVNQDVDENDGCDRMNYTLLSQNNNNNNNNNNNNNNNNNNNNNNNNNNNNNNNNNNNNNNNNNNNNNNNNNNNNNNNNNTNTNNNGDECIVKPISLIQNKKSGQRSLKTKEHKEILEALYRVTLYPTSEETKTISQILGMTFGQVKSSFRHRREKLSKSGLFSYAKNLKNCGKSTAPLDNFFENCKYLTTKETEEFAAAYDVSFEQIKNYFKGKRAKLNKLSSKAIQDKDNQDNDNNNSNNNENNDDSYSDEGLF.

Low complexity predominate over residues 22–31 (NYDFDNKNNS). Disordered stretches follow at residues 22–140 (NYDF…PNCN), 200–256 (SLNN…SSPS), and 268–348 (DEND…NNGD). Over residues 32–41 (IGGGGGGGGS) the composition is skewed to gly residues. Low complexity-rich tracts occupy residues 42-59 (SSSRSSSSRSSSNRSSSG), 66-78 (SNSSSSINNIINS), and 101-132 (TTTTTTTTTTTTTTTTTKNENISSSESENSSS). The segment covering 284 to 346 (NNNNNNNNNN…NNNNTNTNNN (63 aa)) has biased composition (low complexity). 2 consecutive DNA-binding regions (homeobox) follow at residues 362 to 421 (KSGQ…SKSG) and 424 to 483 (SYAK…NKLS). Residues 483–516 (SSKAIQDKDNQDNDNNNSNNNENNDDSYSDEGLF) form a disordered region. Over residues 495 to 504 (NDNNNSNNNE) the composition is skewed to low complexity. Positions 505-516 (NNDDSYSDEGLF) are enriched in acidic residues.

Its subcellular location is the nucleus. In terms of biological role, putative transcription factor. The chain is Homeobox protein 6 (hbx6) from Dictyostelium discoideum (Social amoeba).